The following is a 352-amino-acid chain: Guanine nucleotide-binding protein alpha-7 subunit (352 aa).

Gly2 carries N-myristoyl glycine lipidation. The S-palmitoyl cysteine moiety is linked to residue Cys4. Residues 32 to 352 (RIIKLLLLGA…AKNLKSMGLC (321 aa)) enclose the G-alpha domain. The G1 motif stretch occupies residues 35–48 (KLLLLGAGESGKST). Residues 40–47 (GAGESGKS), 174–180 (LRTRIKT), 199–203 (DVGGQ), 268–271 (NKKD), and Ala324 contribute to the GTP site. Mg(2+) contacts are provided by Ser47 and Thr180. Positions 172 to 180 (DLLRTRIKT) are G2 motif. Residues 195 to 204 (FRVIDVGGQR) are G3 motif. Positions 264–271 (ILFLNKKD) are G4 motif. The segment at 322 to 327 (TCATDT) is G5 motif.

The protein belongs to the G-alpha family. G(i/o/t/z) subfamily. In terms of assembly, g proteins are composed of 3 units; alpha, beta and gamma. The alpha chain contains the guanine nucleotide binding site.

Its function is as follows. Guanine nucleotide-binding proteins (G proteins) are involved as modulators or transducers in various transmembrane signaling systems. This is Guanine nucleotide-binding protein alpha-7 subunit (gpa-7) from Caenorhabditis elegans.